Here is a 130-residue protein sequence, read N- to C-terminus: Small ribosomal subunit protein uS8 (130 aa).

It belongs to the universal ribosomal protein uS8 family. As to quaternary structure, part of the 30S ribosomal subunit. Contacts proteins S5 and S12.

Its function is as follows. One of the primary rRNA binding proteins, it binds directly to 16S rRNA central domain where it helps coordinate assembly of the platform of the 30S subunit. In Phytoplasma mali (strain AT), this protein is Small ribosomal subunit protein uS8.